The primary structure comprises 485 residues: GTPase Obg (485 aa).

In terms of domain architecture, Obg spans 2–159 (PRFVDRVVIH…RDLTLELKTV (158 aa)). One can recognise an OBG-type G domain in the interval 160-341 (ADVGLIGFPS…LIFALWEMVK (182 aa)). GTP-binding positions include 166 to 173 (GFPSAGKS), 191 to 195 (FTTLV), 212 to 215 (DVPG), 292 to 295 (NKID), and 322 to 324 (STV). Positions 173 and 193 each coordinate Mg(2+). The 79-residue stretch at 359-437 (PIPVDESGFT…IGDVTFDWEP (79 aa)) folds into the OCT domain. Positions 450-485 (RGTDIRLEQTDRVGAAERKAARRERRQPGESGGEDS) are disordered. Residues 452-468 (TDIRLEQTDRVGAAERK) are compositionally biased toward basic and acidic residues.

The protein belongs to the TRAFAC class OBG-HflX-like GTPase superfamily. OBG GTPase family. As to quaternary structure, monomer. Mg(2+) serves as cofactor.

The protein localises to the cytoplasm. An essential GTPase which binds GTP, GDP and possibly (p)ppGpp with moderate affinity, with high nucleotide exchange rates and a fairly low GTP hydrolysis rate. Plays a role in control of the cell cycle, stress response, ribosome biogenesis and in those bacteria that undergo differentiation, in morphogenesis control. In Mycolicibacterium smegmatis (strain ATCC 700084 / mc(2)155) (Mycobacterium smegmatis), this protein is GTPase Obg.